The sequence spans 186 residues: Shikimate kinase (186 aa).

21-26 provides a ligand contact to ATP; it reads GVGKTT. Threonine 25 contacts Mg(2+). Residues aspartate 43, arginine 67, and glycine 90 each contribute to the substrate site. Arginine 129 is a binding site for ATP. Arginine 147 is a binding site for substrate.

It belongs to the shikimate kinase family. Monomer. Mg(2+) is required as a cofactor.

The protein localises to the cytoplasm. It catalyses the reaction shikimate + ATP = 3-phosphoshikimate + ADP + H(+). It functions in the pathway metabolic intermediate biosynthesis; chorismate biosynthesis; chorismate from D-erythrose 4-phosphate and phosphoenolpyruvate: step 5/7. In terms of biological role, catalyzes the specific phosphorylation of the 3-hydroxyl group of shikimic acid using ATP as a cosubstrate. The chain is Shikimate kinase from Bacillus subtilis (strain 168).